The following is a 291-amino-acid chain: Protease HtpX homolog (291 aa).

The next 2 membrane-spanning stretches (helical) occupy residues 4 to 24 and 38 to 58; these read IVLF…SARL and MGML…ISLM. Residue histidine 144 participates in Zn(2+) binding. Residue glutamate 145 is part of the active site. Histidine 148 lines the Zn(2+) pocket. A run of 2 helical transmembrane segments spans residues 152-172 and 199-219; these read GDMV…IFLA and VSSI…VMFF. Residue glutamate 224 coordinates Zn(2+).

The protein belongs to the peptidase M48B family. Requires Zn(2+) as cofactor.

It localises to the cell inner membrane. This chain is Protease HtpX homolog, found in Prosthecochloris aestuarii (strain DSM 271 / SK 413).